The chain runs to 281 residues: 2,3,4,5-tetrahydropyridine-2,6-dicarboxylate N-succinyltransferase (281 aa).

The substrate site is built by arginine 108 and aspartate 145.

The protein belongs to the transferase hexapeptide repeat family. Homotrimer.

The protein localises to the cytoplasm. It catalyses the reaction (S)-2,3,4,5-tetrahydrodipicolinate + succinyl-CoA + H2O = (S)-2-succinylamino-6-oxoheptanedioate + CoA. It participates in amino-acid biosynthesis; L-lysine biosynthesis via DAP pathway; LL-2,6-diaminopimelate from (S)-tetrahydrodipicolinate (succinylase route): step 1/3. This Parvibaculum lavamentivorans (strain DS-1 / DSM 13023 / NCIMB 13966) protein is 2,3,4,5-tetrahydropyridine-2,6-dicarboxylate N-succinyltransferase.